The sequence spans 382 residues: Lipid-A-disaccharide synthase (382 aa).

Belongs to the LpxB family.

It catalyses the reaction a lipid X + a UDP-2-N,3-O-bis[(3R)-3-hydroxyacyl]-alpha-D-glucosamine = a lipid A disaccharide + UDP + H(+). It functions in the pathway bacterial outer membrane biogenesis; LPS lipid A biosynthesis. Functionally, condensation of UDP-2,3-diacylglucosamine and 2,3-diacylglucosamine-1-phosphate to form lipid A disaccharide, a precursor of lipid A, a phosphorylated glycolipid that anchors the lipopolysaccharide to the outer membrane of the cell. This chain is Lipid-A-disaccharide synthase, found in Alkalilimnicola ehrlichii (strain ATCC BAA-1101 / DSM 17681 / MLHE-1).